Here is a 741-residue protein sequence, read N- to C-terminus: Catalase-peroxidase 2 (741 aa).

Positions 1 to 28 are cleaved as a signal peptide; it reads MQRNRIAKSVLAALAVIAMSAGSISARA. Positions 107–228 form a cross-link, tryptophyl-tyrosyl-methioninium (Trp-Tyr) (with M-254); that stretch reads WHGAGTYRTY…LAATQMGLIY (122 aa). The Proton acceptor role is filled by H108. The tryptophyl-tyrosyl-methioninium (Tyr-Met) (with W-107) cross-link spans 228-254; the sequence is YVNPEGPNGNPDPVAAAQDIREAFGRM. Residue H269 coordinates heme b.

Belongs to the peroxidase family. Peroxidase/catalase subfamily. Homodimer or homotetramer. The cofactor is heme b. Post-translationally, formation of the three residue Trp-Tyr-Met cross-link is important for the catalase, but not the peroxidase activity of the enzyme.

It catalyses the reaction H2O2 + AH2 = A + 2 H2O. It carries out the reaction 2 H2O2 = O2 + 2 H2O. In terms of biological role, bifunctional enzyme with both catalase and broad-spectrum peroxidase activity. This Burkholderia vietnamiensis (strain G4 / LMG 22486) (Burkholderia cepacia (strain R1808)) protein is Catalase-peroxidase 2.